The following is a 708-amino-acid chain: E3 ubiquitin-protein ligase RNF169 (708 aa).

Low complexity-rich tracts occupy residues 1–20 (MAAA…AALS) and 33–53 (AAKT…LSPP). 3 disordered regions span residues 1–71 (MAAA…CAGC), 96–169 (ADAA…EPDF), and 195–262 (EEKL…MTQT). Phosphoserine is present on Ser12. Residues 68–107 (CAGCLEPPGEAAALPCGHSLCRGCAQRAADAAGPGCPRCR) form an RING-type zinc finger. The segment covering 132–147 (CARRSQPERCRPRRDG) has biased composition (basic and acidic residues). Residues 148-167 (GAAAAGPRPEQEPRAAPAEP) are compositionally biased toward low complexity. Basic and acidic residues predominate over residues 195 to 243 (EEKLQEEKPSEDQIHKLLPEDTETGKRKMDEQKKRDEPLVLKTNLERCP). The UMI motif signature appears at 205–213 (EDQIHKLLP). Ser247 and Ser249 each carry phosphoserine. A Glycyl lysine isopeptide (Lys-Gly) (interchain with G-Cter in SUMO2) cross-link involves residue Lys286. Phosphoserine is present on Ser339. Residue Lys362 forms a Glycyl lysine isopeptide (Lys-Gly) (interchain with G-Cter in SUMO2) linkage. A phosphoserine mark is found at Ser368, Ser403, and Ser409. Residue Thr410 is modified to Phosphothreonine. Ser485 is modified (phosphoserine). Residues 491–555 (SEYTGPTSAD…EQFEGLGSTP (65 aa)) form a disordered region. Lys511 is covalently cross-linked (Glycyl lysine isopeptide (Lys-Gly) (interchain with G-Cter in SUMO2)). Thr554 is modified (phosphothreonine). Ser644 is subject to Phosphoserine. An MIU motif motif is present at residues 665–682 (QEEEDRQLALQLQRMFDN). Residues 689–701 (RRKGSVDQYLLRS) carry the LR motif motif. Ser693 bears the Phosphoserine mark.

It belongs to the RNF169 family. Interacts with DYRK1B. Phosphorylated by DYRK1A; phosphorylation increases RNF169 ability to block accumulation of TP53BP1 at the DSB sites.

Its subcellular location is the chromosome. It localises to the nucleus. The protein localises to the nucleoplasm. The catalysed reaction is S-ubiquitinyl-[E2 ubiquitin-conjugating enzyme]-L-cysteine + [acceptor protein]-L-lysine = [E2 ubiquitin-conjugating enzyme]-L-cysteine + N(6)-ubiquitinyl-[acceptor protein]-L-lysine.. Its pathway is protein modification; protein ubiquitination. In terms of biological role, probable E3 ubiquitin-protein ligase that acts as a regulator of double-strand breaks (DSBs) repair following DNA damage. Functions in a non-canonical fashion to harness RNF168-mediated protein recruitment to DSB-containing chromatin, thereby contributing to regulation of DSB repair pathway utilization. Once recruited to DSB repair sites by recognizing and binding ubiquitin catalyzed by RNF168, competes with TP53BP1 and BRCA1 for association with RNF168-modified chromatin, thereby favouring homologous recombination repair (HRR) and single-strand annealing (SSA) instead of non-homologous end joining (NHEJ) mediated by TP53BP1. E3 ubiquitin-protein ligase activity is not required for regulation of DSBs repair. This is E3 ubiquitin-protein ligase RNF169 (RNF169) from Homo sapiens (Human).